Reading from the N-terminus, the 186-residue chain is ATP synthase subunit delta, cyanelle (186 aa).

This sequence belongs to the ATPase delta chain family. As to quaternary structure, F-type ATPases have 2 components, F(1) - the catalytic core - and F(0) - the membrane proton channel. F(1) has five subunits: alpha(3), beta(3), gamma(1), delta(1), epsilon(1). CF(0) has four main subunits: a(1), b(1), b'(1) and c(10-14). The alpha and beta chains form an alternating ring which encloses part of the gamma chain. F(1) is attached to F(0) by a central stalk formed by the gamma and epsilon chains, while a peripheral stalk is formed by the delta, b and b' chains.

Its subcellular location is the plastid. It localises to the cyanelle thylakoid membrane. F(1)F(0) ATP synthase produces ATP from ADP in the presence of a proton or sodium gradient. F-type ATPases consist of two structural domains, F(1) containing the extramembraneous catalytic core and F(0) containing the membrane proton channel, linked together by a central stalk and a peripheral stalk. During catalysis, ATP synthesis in the catalytic domain of F(1) is coupled via a rotary mechanism of the central stalk subunits to proton translocation. Functionally, this protein is part of the stalk that links CF(0) to CF(1). It either transmits conformational changes from CF(0) to CF(1) or is implicated in proton conduction. The protein is ATP synthase subunit delta, cyanelle of Cyanophora paradoxa.